Here is a 159-residue protein sequence, read N- to C-terminus: Small ribosomal subunit protein uS9 (159 aa).

It belongs to the universal ribosomal protein uS9 family.

The sequence is that of Small ribosomal subunit protein uS9 from Rickettsia africae (strain ESF-5).